A 299-amino-acid chain; its full sequence is Putative ankyrin repeat protein R864 (299 aa).

ANK repeat units lie at residues 78-107 (SLNK…NIES), 108-137 (NNNY…NIKS), 139-167 (NNRV…DIRS), 168-197 (NDDY…DIRS), 199-227 (YYYI…DIRA), 228-257 (YNNC…DIRN), and 258-287 (DNDY…DIKT).

In Acanthamoeba polyphaga mimivirus (APMV), this protein is Putative ankyrin repeat protein R864.